The sequence spans 115 residues: Probable mycobacterial cidal antitoxin Rv3188 (115 aa).

It belongs to the MbcA/ParS/Xre antitoxin family. As to quaternary structure, forms a heterotetramer with cognate toxin Rv3189.

Probable antitoxin component of a type II toxin-antitoxin (TA) system. Neutralizes the activity of cognate toxin Rv3189 by blocking access to the toxin active site. This chain is Probable mycobacterial cidal antitoxin Rv3188, found in Mycobacterium tuberculosis (strain ATCC 25618 / H37Rv).